An 808-amino-acid chain; its full sequence is Genome polyprotein (808 aa).

A disordered region spans residues 34–55 (TAEVGSHQPEPLKTSVDKPGSK). 2 short sequence motifs ((L)YPX(n)L motif) span residues 146-150 (YPHGL) and 179-184 (YPVWEL).

The protein belongs to the picornaviridae polyprotein family. In terms of assembly, homopentamer. Homooligomer. Interacts with capsid protein VP2. Interacts with capsid protein VP3. As to quaternary structure, interacts with capsid protein VP1. Interacts with capsid protein VP3. In terms of assembly, interacts with capsid protein VP1. Interacts with capsid protein VP2. Post-translationally, specific enzymatic cleavages by viral protease in vivo yield a variety of precursors and mature proteins. Polyprotein processing intermediates are produced, such as P1-2A which is a functional precursor of the structural proteins, VP0 which is a VP4-VP2 precursor, VP1-2A precursor, 3ABC precursor which is a stable and catalytically active precursor of 3A, 3B and 3C proteins, 3AB and 3CD precursors. The assembly signal 2A is removed from VP1-2A by a host protease, possibly host Cathepsin L. This cleavage occurs over a region of 3 amino-acids probably generating VP1 proteins with heterogeneous C-termini. During virion maturation, immature virions are rendered infectious following cleavage of VP0 into VP4 and VP2. This maturation seems to be an autocatalytic event triggered by the presence of RNA in the capsid and is followed by a conformational change of the particle. In terms of processing, the assembly signal 2A is removed from VP1-2A by a host protease, possibly host Cathepsin L in naked virions. This cleavage does not occur in enveloped virions. This cleavage occurs over a region of 3 amino-acids probably generating VP1 proteins with heterogeneous C-termini. Post-translationally, unlike other picornaviruses, does not seem to be myristoylated.

Its subcellular location is the virion. The protein resides in the host endosome. It is found in the host multivesicular body. Functionally, capsid proteins VP1, VP2, and VP3 form a closed capsid enclosing the viral positive strand RNA genome. All these proteins contain a beta-sheet structure called beta-barrel jelly roll. Together they form an icosahedral capsid (T=3) composed of 60 copies of each VP1, VP2, and VP3, with a diameter of approximately 300 Angstroms. VP1 is situated at the 12 fivefold axes, whereas VP2 and VP3 are located at the quasi-sixfold axes. The naked capsid interacts with the host receptor HAVCR1 to provide virion attachment to and probably entry into the target cell. In terms of biological role, VP0 precursor is a component of the immature procapsids. Its function is as follows. Plays a role in the assembly of the 12 pentamers into an icosahedral structure. Has not been detected in mature virions, supposedly owing to its small size. Precursor component of immature procapsids that corresponds to an extended form of the structural protein VP1. After maturation, possibly by the host Cathepsin L, the assembly signal 2A is cleaved to give rise to the mature VP1 protein. The protein is Genome polyprotein of Human hepatitis A virus genotype IIIA (isolate GA76) (HHAV).